The primary structure comprises 609 residues: Protein KINESIN LIGHT CHAIN-RELATED 1 (609 aa).

The interval 1-77 (MPAMPGLVSV…TAAVIDVDDP (77 aa)) is disordered. The span at 38 to 55 (KKTPSSTPSRSKPSPNRS) shows a compositional bias: low complexity. TPR repeat units follow at residues 140 to 173 (AMSL…PDPT), 183 to 216 (FSGH…QIQT), 225 to 258 (GETC…HRAH), 267 to 301 (AADR…IASG), 307 to 340 (ASID…FKAS), 349 to 382 (ASVF…YNKP), 392 to 425 (AGGL…LEDK), 433 to 466 (AGLE…LRAA), 474 to 507 (GVVL…LEQE), and 516 to 549 (LGVY…REEK). Residues 582-609 (LQNLIDPNARPPKKESSAKKWPSLGFKF) form a disordered region.

This sequence belongs to the kinesin light chain family. In terms of assembly, interacts with IQD1.

It is found in the cytoplasm. Its subcellular location is the cytoskeleton. The sequence is that of Protein KINESIN LIGHT CHAIN-RELATED 1 from Arabidopsis thaliana (Mouse-ear cress).